Here is a 227-residue protein sequence, read N- to C-terminus: Prolactin (227 aa).

An N-terminal signal peptide occupies residues 1-28 (MDSKWSRRTGSLLLLLVSNLLLCKSTAS). An intrachain disulfide couples Cys-32 to Cys-39. Phosphoserine occurs at positions 54, 62, and 118. 2 cysteine pairs are disulfide-bonded: Cys-86–Cys-202 and Cys-219–Cys-227.

It belongs to the somatotropin/prolactin family. In terms of assembly, interacts with PRLR.

It localises to the secreted. Functionally, prolactin acts primarily on the mammary gland by promoting lactation. This chain is Prolactin (PRL), found in Oryctolagus cuniculus (Rabbit).